Consider the following 646-residue polypeptide: Long-chain fatty acid transport protein 1 (646 aa).

Residues 1–13 are Extracellular-facing; the sequence is MRAPGAGSASVAS. Residues 14-34 form a helical membrane-spanning segment; it reads LVLLWLLGLPWTWSTAAALGV. The Cytoplasmic portion of the chain corresponds to 35–646; the sequence is YVGGGGWRFL…TRICSGAFAL (612 aa). Residues 191–475 are sufficient for oligomerization; that stretch reads EMSGELGKSL…YISESATSKK (285 aa). Residue 246–257 participates in AMP binding; the sequence is YIYTSGTTGLPK.

The protein belongs to the ATP-dependent AMP-binding enzyme family. Self-associates. May function as a homodimer. Interacts with EPRS1; mediates the translocation of SLC27A1 from the cytoplasm to the plasma membrane thereby increasing the uptake of long-chain fatty acids. Interacts with DGAT2 and this interaction is enhanced in the presence of ZFYVE1.

It is found in the cell membrane. The protein localises to the endomembrane system. It localises to the cytoplasm. It carries out the reaction a fatty acid(in) = a fatty acid(out). The enzyme catalyses (9Z)-octadecenoate(out) = (9Z)-octadecenoate(in). It catalyses the reaction hexadecanoate(out) = hexadecanoate(in). The catalysed reaction is (5Z,8Z,11Z,14Z)-eicosatetraenoate(out) = (5Z,8Z,11Z,14Z)-eicosatetraenoate(in). It carries out the reaction (9Z,12Z)-octadecadienoate(out) = (9Z,12Z)-octadecadienoate(in). The enzyme catalyses a long-chain fatty acid + ATP + CoA = a long-chain fatty acyl-CoA + AMP + diphosphate. It catalyses the reaction (5Z,8Z,11Z,14Z)-eicosatetraenoate + ATP + CoA = (5Z,8Z,11Z,14Z)-eicosatetraenoyl-CoA + AMP + diphosphate. The catalysed reaction is a very long-chain fatty acid + ATP + CoA = a very long-chain fatty acyl-CoA + AMP + diphosphate. It carries out the reaction tetracosanoate + ATP + CoA = tetracosanoyl-CoA + AMP + diphosphate. Its activity is regulated as follows. Inhibited by Triacsin C. In terms of biological role, mediates the import of long-chain fatty acids (LCFA) into the cell by facilitating their transport at the plasma membrane. Also functions as an acyl-CoA ligase catalyzing the ATP-dependent formation of fatty acyl-CoA using LCFA and very-long-chain fatty acids (VLCFA) as substrates, which prevents fatty acid efflux from cells and might drive more fatty acid uptake. May act directly as a bona fide transporter, or alternatively, in a cytoplasmic or membrane-associated multimeric protein complex to trap and draw fatty acids towards accumulation. Plays a pivotal role in regulating available LCFA substrates from exogenous sources in tissues undergoing high levels of beta-oxidation or triglyceride synthesis. May be involved in regulation of cholesterol metabolism. Probably involved in fatty acid transport across the blood barrier. The protein is Long-chain fatty acid transport protein 1 of Bos taurus (Bovine).